The chain runs to 201 residues: Pyridoxal 5'-phosphate synthase subunit PdxT (201 aa).

An L-glutamine-binding site is contributed by 51–53; the sequence is GES. Cysteine 83 (nucleophile) is an active-site residue. Residues arginine 112 and 141-142 each bind L-glutamine; that span reads IR. Active-site charge relay system residues include histidine 182 and glutamate 184.

The protein belongs to the glutaminase PdxT/SNO family. As to quaternary structure, in the presence of PdxS, forms a dodecamer of heterodimers. Only shows activity in the heterodimer.

It carries out the reaction aldehydo-D-ribose 5-phosphate + D-glyceraldehyde 3-phosphate + L-glutamine = pyridoxal 5'-phosphate + L-glutamate + phosphate + 3 H2O + H(+). It catalyses the reaction L-glutamine + H2O = L-glutamate + NH4(+). The protein operates within cofactor biosynthesis; pyridoxal 5'-phosphate biosynthesis. Its function is as follows. Catalyzes the hydrolysis of glutamine to glutamate and ammonia as part of the biosynthesis of pyridoxal 5'-phosphate. The resulting ammonia molecule is channeled to the active site of PdxS. The protein is Pyridoxal 5'-phosphate synthase subunit PdxT of Thermobifida fusca (strain YX).